Reading from the N-terminus, the 304-residue chain is Dermonecrotic toxin LlSicTox-betaIA1 (304 aa).

An N-terminal signal peptide occupies residues 1-21 (MLLSAVISFIGFAAFLQEANG). A propeptide spanning residues 22 to 26 (HVVER) is cleaved from the precursor. His38 is an active-site residue. Mg(2+)-binding residues include Glu58 and Asp60. The Nucleophile role is filled by His74. Intrachain disulfides connect Cys78/Cys84 and Cys80/Cys223. Residue Asp118 participates in Mg(2+) binding.

Belongs to the arthropod phospholipase D family. Class II subfamily. Class IIb sub-subfamily. It depends on Mg(2+) as a cofactor. Expressed by the venom gland.

It localises to the secreted. It carries out the reaction an N-(acyl)-sphingosylphosphocholine = an N-(acyl)-sphingosyl-1,3-cyclic phosphate + choline. The catalysed reaction is an N-(acyl)-sphingosylphosphoethanolamine = an N-(acyl)-sphingosyl-1,3-cyclic phosphate + ethanolamine. The enzyme catalyses a 1-acyl-sn-glycero-3-phosphocholine = a 1-acyl-sn-glycero-2,3-cyclic phosphate + choline. It catalyses the reaction a 1-acyl-sn-glycero-3-phosphoethanolamine = a 1-acyl-sn-glycero-2,3-cyclic phosphate + ethanolamine. Dermonecrotic toxins cleave the phosphodiester linkage between the phosphate and headgroup of certain phospholipids (sphingolipid and lysolipid substrates), forming an alcohol (often choline) and a cyclic phosphate. This toxin acts on sphingomyelin (SM) with low activity. It may also act on ceramide phosphoethanolamine (CPE), lysophosphatidylcholine (LPC) and lysophosphatidylethanolamine (LPE), but not on lysophosphatidylserine (LPS), and lysophosphatidylglycerol (LPG). It acts by transphosphatidylation, releasing exclusively cyclic phosphate products as second products. Induces hemolysis, dermonecrosis, and edema. Also induces platelet aggregation. This Loxosceles laeta (South American recluse spider) protein is Dermonecrotic toxin LlSicTox-betaIA1.